A 111-amino-acid polypeptide reads, in one-letter code: MSRRPNFGGMGMGGMNMQQMMKQAKKLQAQMAQEQENITAQEFTGKSADDLVVATFTGDRKLKDIKIDKEAIDPDDPDMLQDLVIDAVNKGLSQIDEATQASLGKYTKGLM.

Belongs to the YbaB/EbfC family. Homodimer.

The protein resides in the cytoplasm. It localises to the nucleoid. Binds to DNA and alters its conformation. May be involved in regulation of gene expression, nucleoid organization and DNA protection. The protein is Nucleoid-associated protein lhv_0401 of Lactobacillus helveticus (strain DPC 4571).